A 427-amino-acid polypeptide reads, in one-letter code: UDP-N-acetyl-D-mannosamine dehydrogenase (427 aa).

Residues Tyr-19, Ile-20, Asp-39, Arg-44, Thr-91, and Thr-130 each contribute to the NAD(+) site. UDP-N-acetyl-alpha-D-mannosaminouronate-binding residues include Arg-155, Val-156, Lys-207, Asn-211, Arg-214, His-245, Arg-247, and Gly-258. The active-site Proton donor/acceptor is Lys-207. Catalysis depends on Cys-261, which acts as the Nucleophile. Tyr-318 and Lys-319 together coordinate UDP-N-acetyl-alpha-D-mannosaminouronate. Arg-326 is an NAD(+) binding site. A UDP-N-acetyl-alpha-D-mannosaminouronate-binding site is contributed by Lys-404.

This sequence belongs to the UDP-glucose/GDP-mannose dehydrogenase family. As to quaternary structure, homotetramer; probably dimer of dimers.

The catalysed reaction is UDP-N-acetyl-alpha-D-mannosamine + 2 NAD(+) + H2O = UDP-N-acetyl-alpha-D-mannosaminouronate + 2 NADH + 3 H(+). In terms of biological role, catalyzes the four-electron oxidation of UDP-N-acetyl-D-mannosamine (UDP-ManNAc), reducing NAD(+) and releasing UDP-N-acetylmannosaminuronic acid (UDP-ManNAcA). This Methanococcus vannielii (strain ATCC 35089 / DSM 1224 / JCM 13029 / OCM 148 / SB) protein is UDP-N-acetyl-D-mannosamine dehydrogenase (wecC).